Consider the following 329-residue polypeptide: Phosphate acyltransferase (329 aa).

It belongs to the PlsX family. In terms of assembly, homodimer. Probably interacts with PlsY.

The protein resides in the cytoplasm. It catalyses the reaction a fatty acyl-[ACP] + phosphate = an acyl phosphate + holo-[ACP]. It participates in lipid metabolism; phospholipid metabolism. Functionally, catalyzes the reversible formation of acyl-phosphate (acyl-PO(4)) from acyl-[acyl-carrier-protein] (acyl-ACP). This enzyme utilizes acyl-ACP as fatty acyl donor, but not acyl-CoA. The chain is Phosphate acyltransferase from Campylobacter lari (strain RM2100 / D67 / ATCC BAA-1060).